Reading from the N-terminus, the 253-residue chain is Chloride intracellular channel protein 4 (253 aa).

A2 carries the N-acetylalanine modification. Residues 2–101 (ALSMPLNGLK…EEFLEEVLCP (100 aa)) form a required for insertion into the membrane region. At S4 the chain carries Phosphoserine. K24 carries the N6-acetyllysine modification. The G-site motif lies at 35–38 (CPFS). The helical transmembrane segment at 37-57 (FSQRLFMILWLKGVVFSVTTV) threads the bilayer. The GST C-terminal domain maps to 81–244 (NSEVKTDVNK…PSDKEVEIAY (164 aa)). An N6-acetyllysine modification is found at K130. A phosphoserine mark is found at S132, S167, and S236. Y244 carries the post-translational modification Phosphotyrosine.

The protein belongs to the chloride channel CLIC family. Monomer. Interacts with HRH30. Interacts with AKAP9. In terms of tissue distribution, detected in blood vessels in the retina (at protein level). Expressed to the greatest extent in vivo in heart, lung, liver, kidney, and skin.

The protein localises to the cytoplasm. Its subcellular location is the cytoskeleton. It is found in the microtubule organizing center. It localises to the centrosome. The protein resides in the cytoplasmic vesicle membrane. The protein localises to the nucleus. Its subcellular location is the cell membrane. It is found in the mitochondrion. It localises to the cell junction. It catalyses the reaction chloride(in) = chloride(out). The enzyme catalyses thiocyanate(in) = thiocyanate(out). It carries out the reaction nitrate(in) = nitrate(out). The catalysed reaction is iodide(out) = iodide(in). It catalyses the reaction bromide(in) = bromide(out). The enzyme catalyses fluoride(in) = fluoride(out). It carries out the reaction choline(out) = choline(in). Its function is as follows. In the soluble state, catalyzes glutaredoxin-like thiol disulfide exchange reactions with reduced glutathione as electron donor. Can insert into membranes and form voltage-dependent multi-ion conductive channels. Membrane insertion seems to be redox-regulated and may occur only under oxidizing conditions. Has alternate cellular functions like a potential role in angiogenesis or in maintaining apical-basolateral membrane polarity during mitosis and cytokinesis. Could also promote endothelial cell proliferation and regulate endothelial morphogenesis (tubulogenesis). Promotes cell-surface expression of HRH3. This is Chloride intracellular channel protein 4 (Clic4) from Mus musculus (Mouse).